A 164-amino-acid chain; its full sequence is Type II secretion system protein M (164 aa).

Residues 1-17 are Cytoplasmic-facing; that stretch reads MNELRQRWQAMSQRERQ. Residues 18–38 traverse the membrane as a helical segment; that stretch reads LMVVCAAVLLLCVVYYAILQP. Residues 39 to 164 lie on the Periplasmic side of the membrane; the sequence is WQEREDLWER…RLMLERTDEA (126 aa).

This sequence belongs to the GSP M family. In terms of assembly, type II secretion system is composed of four main components: the outer membrane complex, the inner membrane complex, the cytoplasmic secretion ATPase and the periplasm-spanning pseudopilus. Forms homodimers. Interacts with OutL/GspL. Interacts with OutE/GspE and OutF/GspF.

The protein resides in the cell inner membrane. Inner membrane component of the type II secretion system required for the energy-dependent secretion of extracellular factors such as proteases and toxins from the periplasm. Plays a role in the complex assembly and recruits OutL resulting in a stable complex in the inner membrane. Provides thus a link between the energy-providing OutE protein in the cytoplasm and the rest of the T2SS machinery. This chain is Type II secretion system protein M (outM), found in Pectobacterium carotovorum subsp. carotovorum (Erwinia carotovora subsp. carotovora).